A 462-amino-acid polypeptide reads, in one-letter code: Cysteine--tRNA ligase (462 aa).

Zn(2+) is bound at residue C30. Residues 32-42 (MTVYDYCHVGH) carry the 'HIGH' region motif. Zn(2+)-binding residues include C214, H239, and E243. The 'KMSKS' region signature appears at 271 to 275 (KMSKS). K274 contributes to the ATP binding site.

The protein belongs to the class-I aminoacyl-tRNA synthetase family. In terms of assembly, monomer. Zn(2+) is required as a cofactor.

The protein localises to the cytoplasm. The catalysed reaction is tRNA(Cys) + L-cysteine + ATP = L-cysteinyl-tRNA(Cys) + AMP + diphosphate. The protein is Cysteine--tRNA ligase of Cupriavidus pinatubonensis (strain JMP 134 / LMG 1197) (Cupriavidus necator (strain JMP 134)).